The following is a 343-amino-acid chain: Chlorophyll(ide) b reductase NOL, chloroplastic (343 aa).

Residues 1–54 (MAATAAYLPLRAQAQVGLAPLRPSGSAAAGARLPGRTARRRLAARGGPEAAGIR) constitute a chloroplast transit peptide. 78-102 (ITGSTKGIGYALAKEFLKAGDNVVI) contacts NAD(+). Catalysis depends on Y228, which acts as the Proton acceptor.

This sequence belongs to the short-chain dehydrogenases/reductases (SDR) family. Interacts with NCY1 to form a complex that acts as a chlorophyll b reductase. As to expression, expressed in leaves and stems. Also detected in non-photosynthetic tissues such as roots.

It is found in the plastid. Its subcellular location is the chloroplast thylakoid membrane. The catalysed reaction is 7(1)-hydroxychlorophyllide a + NAD(+) = chlorophyllide b + NADH + H(+). The enzyme catalyses 7(1)-hydroxychlorophyllide a + NADP(+) = chlorophyllide b + NADPH + H(+). Its function is as follows. Required for chlorophyll b degradation. This chain is Chlorophyll(ide) b reductase NOL, chloroplastic (NOL), found in Oryza sativa subsp. japonica (Rice).